We begin with the raw amino-acid sequence, 1681 residues long: MLTSPEPKGLVPFTTESLELIENHIAKKCNEDPEEEEGLKPSRNLEAGKRLPIPYGTLPRGTVSEPLEDVDPYYYVKRNTFMVLNRSRVIFRFNAVSIFCTLSPLNSLRRAAIKALVHPLFRLLILISVLTDSILMCMSNLPEWILAIENTLLGIYAFEILVKVIARGIWAGSFSFLGDLWNWLDFSVTLFELITRFSPLSSFLMLKTIRTFRILKIIPLNHGLQSIVMTLAQCLKKLFGAIALALFFLAVFSLLGMGLFMGNLKHKCLRWPEENENETLHNRTGSLNYSPERINFYYMEGAKYALLCGNRTDAGQCPEGYVCVKEGTNPDNGFTSFDNFGWSLLAMFRLMTQDYPELLYHQILYASGKVYMIFFVMISFWFAFYLTSLFLGILTMTYEKEKQRACEESGGLDPKCQQTVKELDEENDAAEMETTQIEMKKRSPTSINTTLDILEDTTLGHREEPETSRKKCPICWHKFIKTCFIWKCSPCWVKLNEFADRVITHPLADLFLVICIVLNICFLALEHFPMSEELRSLLHVGNLVFIGIYTIEMILKIIAMHPYGYFQISWNIFDSILVVLELTEILLADVEGLAVLITVPLIFIKLGKYGPPFKSLMRILGSSLMALKDLVLLLCIFVYFSAVFGMKLFGRSYKDCVCHIKEDCQPQRWHMSDFLHAYMTVFRILCGEWIETLWECMEVAGQAWCIPFYMMVILIGNLLILYLFVTLVSSFSYYDATSEVNKEAKNLQLAMARIKSGINSMLLKLMCTERSVPTEATDQICDPSVKENISGHTLSELSNTQTFLRYKDQSSSTEKTPVTESESQSLIASPSASETVPIASGESDIENLDNKETRSKSGNGGSKEKMKQSSSSECSTVDIAISEEEEMVYEHEKSKLHKNGYERKSSTGQISRESRNGKIWKNIRKTCCKIVENSWFECFIGLVTLLCTGTLALEDIYIDQRKTTKILLEYADMIFAYIFILEMLLKWVAYGFKAFFSNNWYKLDFMVVIVFCLSLIGKTREDLNPLTSIKFLRALRVLSQFERMKVVLRALIKTTLPTVSVFLVCLMIWLLFSVIGVQLFAGKFYECIDPTKGERFPVFEVMNKSQCEKLLFNESMPWENAKLNFDNVGNGFLSLLQVATFNGWISIMNSAIDSVGVNMQPSFEYNLYMYSYFIIFVIFGLFLPLCMLIGVIIRNFNKQKIKQGGSNIFITVKQKKQYRALKKLLYADVQKPTPRPRNKFQGFLFDLVTHRVFNVIIILLICFQATTIMIQKDEQSPQMETAIFWMNSIFVMLFTLECILKLTAFRCHYFTSAWNVHDFMVVIFSITGLLLPLTIGQYFVPPSLVQLILLSRVIHILRPGKGPKVFHDLMLPLILALPALLNISLLIFLVMFIYAIFGMYNFAYVKKEAGINDVSNFETFGSSMLCLFQVTTFSGWDGMLDAIFNSQWSDCDPDKINPGTQVKGDCGSPSVGISYFVSYILISWLIIVNMYIVLIMEFLSIPSQKKSRTLSEDDFRRFFRVWNRFDPDRTQYIDSSKLSDFAAALDPPLFMAKPNKGQLVAMDLPMAAGDRIHCLDILLAFTKRVMGKDERVEKILSEIESGFMLANPFKITYEPITTTLKRKQEAVSATIIQRAYKSYRLRQNDKNVSDTPAIDDRRDDLTSKGAHSGKIEEKASIQTQI.

The Cytoplasmic segment spans residues 1–118 (MLTSPEPKGL…RRAAIKALVH (118 aa)). The stretch at 101–402 (TLSPLNSLRR…ILTMTYEKEK (302 aa)) is one I repeat. Residues 119–138 (PLFRLLILISVLTDSILMCM) form a helical membrane-spanning segment. At 139–142 (SNLP) the chain is on the extracellular side. The chain crosses the membrane as a helical span at residues 143–168 (EWILAIENTLLGIYAFEILVKVIARG). The Cytoplasmic portion of the chain corresponds to 169 to 179 (IWAGSFSFLGD). The helical transmembrane segment at 180 to 197 (LWNWLDFSVTLFELITRF) threads the bilayer. The Extracellular portion of the chain corresponds to 198–201 (SPLS). A helical membrane pass occupies residues 202-220 (SFLMLKTIRTFRILKIIPL). The Cytoplasmic segment spans residues 221-238 (NHGLQSIVMTLAQCLKKL). The helical transmembrane segment at 239 to 260 (FGAIALALFFLAVFSLLGMGLF) threads the bilayer. Topologically, residues 261-339 (MGNLKHKCLR…PDNGFTSFDN (79 aa)) are extracellular. Cysteines 268 and 308 form a disulfide. Residues Asn-277, Asn-282, Asn-288, and Asn-310 are each glycosylated (N-linked (GlcNAc...) asparagine). The pore-forming intramembrane region spans 340–367 (FGWSLLAMFRLMTQDYPELLYHQILYAS). A topological domain (extracellular) is located at residue Gly-368. The chain crosses the membrane as a helical span at residues 369–408 (KVYMIFFVMISFWFAFYLTSLFLGILTMTYEKEKQRACEE). The Cytoplasmic segment spans residues 409–506 (SGGLDPKCQQ…EFADRVITHP (98 aa)). An II repeat occupies 488–757 (CSPCWVKLNE…QLAMARIKSG (270 aa)). Residues 507–522 (LADLFLVICIVLNICF) form a helical membrane-spanning segment. Residues 523–531 (LALEHFPMS) are Extracellular-facing. Residues 532–560 (EELRSLLHVGNLVFIGIYTIEMILKIIAM) traverse the membrane as a helical segment. Topologically, residues 561–569 (HPYGYFQIS) are cytoplasmic. The chain crosses the membrane as a helical span at residues 570–587 (WNIFDSILVVLELTEILL). Residues 588–593 (ADVEGL) lie on the Extracellular side of the membrane. A helical membrane pass occupies residues 594–609 (AVLITVPLIFIKLGKY). Over 610–626 (GPPFKSLMRILGSSLMA) the chain is Cytoplasmic. A helical membrane pass occupies residues 627–655 (LKDLVLLLCIFVYFSAVFGMKLFGRSYKD). Residues 656 to 673 (CVCHIKEDCQPQRWHMSD) are Extracellular-facing. Cystine bridges form between Cys-658–Cys-664 and Cys-696–Cys-705. The segment at residues 674–700 (FLHAYMTVFRILCGEWIETLWECMEVA) is an intramembrane region (pore-forming). Gly-701 is a topological domain (extracellular). A helical membrane pass occupies residues 702–732 (QAWCIPFYMMVILIGNLLILYLFVTLVSSFS). The Cytoplasmic segment spans residues 733 to 934 (YYDATSEVNK…KTCCKIVENS (202 aa)). Positions 806–834 (YKDQSSSTEKTPVTESESQSLIASPSASE) are enriched in polar residues. Positions 806-875 (YKDQSSSTEK…MKQSSSSECS (70 aa)) are disordered. Residue Ser-843 is modified to Phosphoserine. An III repeat occupies 916–1224 (NGKIWKNIRK…KKQYRALKKL (309 aa)). The chain crosses the membrane as a helical span at residues 935-953 (WFECFIGLVTLLCTGTLAL). The Extracellular portion of the chain corresponds to 954 to 961 (EDIYIDQR). The chain crosses the membrane as a helical span at residues 962–990 (KTTKILLEYADMIFAYIFILEMLLKWVAY). At 991–998 (GFKAFFSN) the chain is on the cytoplasmic side. The chain crosses the membrane as a helical span at residues 999–1020 (NWYKLDFMVVIVFCLSLIGKTR). Glu-1021 is a topological domain (extracellular). A helical membrane pass occupies residues 1022-1040 (DLNPLTSIKFLRALRVLSQ). The Cytoplasmic portion of the chain corresponds to 1041–1055 (FERMKVVLRALIKTT). The chain crosses the membrane as a helical span at residues 1056-1080 (LPTVSVFLVCLMIWLLFSVIGVQLF). The Extracellular segment spans residues 1081 to 1127 (AGKFYECIDPTKGERFPVFEVMNKSQCEKLLFNESMPWENAKLNFDN). Residues Cys-1087 and Cys-1107 are joined by a disulfide bond. 2 N-linked (GlcNAc...) asparagine glycosylation sites follow: Asn-1103 and Asn-1113. An intramembrane region (pore-forming) is located at residues 1128–1154 (VGNGFLSLLQVATFNGWISIMNSAIDS). The Extracellular portion of the chain corresponds to 1155–1167 (VGVNMQPSFEYNL). Residues 1168-1202 (YMYSYFIIFVIFGLFLPLCMLIGVIIRNFNKQKIK) form a helical membrane-spanning segment. The Cytoplasmic segment spans residues 1203–1250 (QGGSNIFITVKQKKQYRALKKLLYADVQKPTPRPRNKFQGFLFDLVTH). An IV repeat occupies 1233-1531 (TPRPRNKFQG…WNRFDPDRTQ (299 aa)). The helical transmembrane segment at 1251–1272 (RVFNVIIILLICFQATTIMIQK) threads the bilayer. At 1273–1276 (DEQS) the chain is on the extracellular side. A helical membrane pass occupies residues 1277–1305 (PQMETAIFWMNSIFVMLFTLECILKLTAF). Over 1306-1312 (RCHYFTS) the chain is Cytoplasmic. A helical membrane pass occupies residues 1313-1338 (AWNVHDFMVVIFSITGLLLPLTIGQY). Residues 1339–1341 (FVP) are Extracellular-facing. The helical transmembrane segment at 1342 to 1362 (PSLVQLILLSRVIHILRPGKG) threads the bilayer. Residues 1363–1377 (PKVFHDLMLPLILAL) are Cytoplasmic-facing. The helical transmembrane segment at 1378–1402 (PALLNISLLIFLVMFIYAIFGMYNF) threads the bilayer. The Extracellular portion of the chain corresponds to 1403–1420 (AYVKKEAGINDVSNFETF). An intramembrane region (pore-forming) is located at residues 1421–1444 (GSSMLCLFQVTTFSGWDGMLDAIF). At 1445–1468 (NSQWSDCDPDKINPGTQVKGDCGS) the chain is on the extracellular side. Residues Cys-1451 and Cys-1466 are joined by a disulfide bond. A helical transmembrane segment spans residues 1469 to 1504 (PSVGISYFVSYILISWLIIVNMYIVLIMEFLSIPSQ). Topologically, residues 1505 to 1681 (KKSRTLSEDD…EEKASIQTQI (177 aa)) are cytoplasmic. Residues 1647 to 1662 (NVSDTPAIDDRRDDLT) are compositionally biased toward basic and acidic residues. A disordered region spans residues 1647–1681 (NVSDTPAIDDRRDDLTSKGAHSGKIEEKASIQTQI).

This sequence belongs to the sodium channel (TC 1.A.1.10) family. SCN7A subfamily. As to quaternary structure, the sodium channel formed by SCN7A is probably a heterooligomeric complex consisting of the ion conducting pore forming alpha subunit SCN7A and regulatory beta subunits such as SCN3B. Interacts with ATP1A1; activates ATP1A1 and thereby indirectly signals to nearby neurons to regulate sodium homeostasis. Not tissue specific but widely expressed. Expressed in regions of the central nervous system that control body fluid ionic balance.

The protein resides in the cell membrane. It catalyses the reaction Na(+)(in) = Na(+)(out). Sodium leak channel functioning as an osmosensor regulating sodium ion levels in various tissues and organs. While most sodium channels are voltage-gated, SCN7A is not and lets sodium flow through membrane along its concentration gradient. In glial cells of the central nervous system, senses body-fluid sodium levels and controls salt intake behavior as well as voluntary water intake through activation of nearby neurons to maintain appropriate sodium levels in the body. By mediating sodium influx into keratinocytes, also plays a role in skin barrier homeostasis. The protein is Sodium channel protein type 7 subunit alpha of Mus musculus (Mouse).